The chain runs to 439 residues: MTHQLKSRDIIALGFMTFALFVGAGNIIFPPMVGLQAGEHVWTAAIGFLITAVGLPVLTVVALAKVGGGVDSLSTPIGKVAGLLLATVCYLAVGPLFATPRTATVSFEVGIAPLTGDSAMPLLIYSVVYFAIVILVSLYPGKLLDTVGNFLAPLKIIALVILSVAAIVWPAGPISNALDAYQNAAFSNGFVNGYLTMDTLGAMVFGIVIVNAARSRGVTEARLLTRYTVWAGLMAGVGLTLLYLALFRLGSDSATLVDQSANGAAILHAYVQHTFGGAGSFLLAALIFIACLVTAVGLTCACAEFFAQYIPLSYRTLVFILGGFSMVVSNLGLSHLIQISIPVLTAIYPPCIALVVLSFTRSWWHNSTRIIAPAMFISLLFGILDGIKASAFGDMLPAWSQRLPLAEQGLAWLMPTVVMVILAIIWDRAAGRQVTSSAH.

Over 1–9 (MTHQLKSRD) the chain is Cytoplasmic. A helical transmembrane segment spans residues 10 to 30 (IIALGFMTFALFVGAGNIIFP). Topologically, residues 31-43 (PMVGLQAGEHVWT) are periplasmic. Residues 44-64 (AAIGFLITAVGLPVLTVVALA) form a helical membrane-spanning segment. The Cytoplasmic segment spans residues 65–79 (KVGGGVDSLSTPIGK). A helical membrane pass occupies residues 80–100 (VAGLLLATVCYLAVGPLFATP). The Periplasmic portion of the chain corresponds to 101–118 (RTATVSFEVGIAPLTGDS). The chain crosses the membrane as a helical span at residues 119–139 (AMPLLIYSVVYFAIVILVSLY). At 140–149 (PGKLLDTVGN) the chain is on the cytoplasmic side. Residues 150 to 170 (FLAPLKIIALVILSVAAIVWP) form a helical membrane-spanning segment. The Periplasmic portion of the chain corresponds to 171–189 (AGPISNALDAYQNAAFSNG). The helical transmembrane segment at 190–210 (FVNGYLTMDTLGAMVFGIVIV) threads the bilayer. At 211–226 (NAARSRGVTEARLLTR) the chain is on the cytoplasmic side. Residues 227 to 247 (YTVWAGLMAGVGLTLLYLALF) traverse the membrane as a helical segment. Topologically, residues 248-277 (RLGSDSATLVDQSANGAAILHAYVQHTFGG) are periplasmic. The helical transmembrane segment at 278–298 (AGSFLLAALIFIACLVTAVGL) threads the bilayer. The Cytoplasmic segment spans residues 299-316 (TCACAEFFAQYIPLSYRT). A helical transmembrane segment spans residues 317–337 (LVFILGGFSMVVSNLGLSHLI). Glutamine 338 is a topological domain (periplasmic). The helical transmembrane segment at 339-359 (ISIPVLTAIYPPCIALVVLSF) threads the bilayer. Over 360–369 (TRSWWHNSTR) the chain is Cytoplasmic. A helical transmembrane segment spans residues 370-390 (IIAPAMFISLLFGILDGIKAS). Residues 391–404 (AFGDMLPAWSQRLP) are Periplasmic-facing. Residues 405–425 (LAEQGLAWLMPTVVMVILAII) form a helical membrane-spanning segment. Over 426–439 (WDRAAGRQVTSSAH) the chain is Cytoplasmic.

Belongs to the branched chain amino acid transporter family.

The protein localises to the cell inner membrane. Its function is as follows. Liv-II branched chain amino acid transport system, which transports leucine, valine and isoleucine. The polypeptide is Branched-chain amino acid permease BrnQ (Salmonella typhimurium (strain LT2 / SGSC1412 / ATCC 700720)).